Here is a 274-residue protein sequence, read N- to C-terminus: 16S rRNA (guanine(1405)-N(7))-methyltransferase (274 aa).

S-adenosyl-L-methionine-binding positions include Phe-64, 102–104 (HMS), Arg-108, Ala-133, Asp-156, 182–183 (DL), Leu-198, and Gln-207.

Belongs to the methyltransferase superfamily. Aminoglycoside resistance family.

The enzyme catalyses guanosine(1405) in 16S rRNA + S-adenosyl-L-methionine = N(7)-methylguanosine(1405) in 16S rRNA + S-adenosyl-L-homocysteine. Specifically methylates the N(7) position of guanine 1405 in 16S rRNA. Confers resistance to aminoglycosides. The polypeptide is 16S rRNA (guanine(1405)-N(7))-methyltransferase (grm) (Micromonospora rosea).